A 150-amino-acid chain; its full sequence is Small ribosomal subunit protein uS11 (150 aa).

The tract at residues Asp130–Leu150 is disordered. A compositionally biased stretch (basic residues) spans Arg141–Leu150.

It belongs to the universal ribosomal protein uS11 family.

This chain is Small ribosomal subunit protein uS11 (RPS14), found in Lupinus luteus (European yellow lupine).